The chain runs to 258 residues: Probable succinate transporter subunit YjjP (258 aa).

5 helical membrane passes run 116–137 (YPRW…KLNN), 143–160 (AVVT…RQLL), 171–191 (FCIT…LPAF), 197–217 (IAMA…NAVA), and 231–251 (WAIA…AMTM).

Belongs to the ThrE exporter (TC 2.A.79) family. The transporter is composed of YjjB and YjjP.

The protein resides in the cell inner membrane. Involved in succinate export with YjjB. Both proteins are required for export. Participates in succinate export, but also in the export of other dicarboxylates, such as fumarate and malate. Contributes to succinate production under both aerobic and anaerobic conditions, and increases fumarate and malate production during anaerobic succinate production. This Klebsiella aerogenes (strain ATCC 13048 / DSM 30053 / CCUG 1429 / JCM 1235 / KCTC 2190 / NBRC 13534 / NCIMB 10102 / NCTC 10006 / CDC 819-56) (Enterobacter aerogenes) protein is Probable succinate transporter subunit YjjP.